The following is a 1450-amino-acid chain: ABC transporter G family member 37 (1450 aa).

The region spanning 158–431 is the ABC transporter 1 domain; it reads GNALHILPNK…FEFMGFRCPA (274 aa). 191 to 198 is a binding site for ATP; sequence GPPGSGKT. One can recognise an ABC transmembrane type-2 1 domain in the interval 509–721; sequence ELLKATIDRE…AQNAISTNEF (213 aa). Transmembrane regions (helical) follow at residues 527-547, 559-579, 614-634, 646-666, 670-690, and 756-776; these read FMYIFKAVNLTLMALIVMTTF, GMIYLGALYFALDTVMFNGFA, IPITFLEVGVYVFITYYVIGF, LLLLALNQMSSALFRFIAGIG, VVSHTFGPLSLLAFAALGGFI, and IGLGALLGYTLLFNLLYTVAL. One can recognise an ABC transporter 2 domain in the interval 852–1104; the sequence is ISFNDVRYSV…KLIEYFEGID (253 aa). Residue 897–904 coordinates ATP; sequence GVSGAGKT. The 215-residue stretch at 1177 to 1391 folds into the ABC transmembrane type-2 2 domain; that stretch reads TQCLACLWKQ…TLYGLVASQF (215 aa). The next 7 membrane-spanning stretches (helical) occupy residues 1198–1218, 1236–1256, 1284–1304, 1311–1331, 1341–1361, 1372–1392, and 1422–1442; these read AVRLLFTIVIALMFGTMFWNL, YAAVLYIGVQNSGSVQPVVVV, LPYIMVQTLIYGVLVYSMIGF, FLWYLFFMYFTLLYFTFYGMM, IAAIISSAFYNVWNLFSGYLI, WYCWICPVAWTLYGLVASQFG, and VVAVVHVVFAVTFAFLFSFAI.

This sequence belongs to the ABC transporter superfamily. ABCG family. PDR (TC 3.A.1.205) subfamily.

The protein resides in the membrane. In terms of biological role, may be a general defense protein. This is ABC transporter G family member 37 from Oryza sativa subsp. japonica (Rice).